The sequence spans 420 residues: CinA-like protein (420 aa).

It belongs to the CinA family.

The sequence is that of CinA-like protein from Chloroherpeton thalassium (strain ATCC 35110 / GB-78).